Reading from the N-terminus, the 598-residue chain is Elongation factor 4 (598 aa).

One can recognise a tr-type G domain in the interval 2–184; the sequence is QHIRNFSIIA…AIVARVPAPK (183 aa). GTP is bound by residues 14–19 and 131–134; these read DHGKST and NKID.

This sequence belongs to the TRAFAC class translation factor GTPase superfamily. Classic translation factor GTPase family. LepA subfamily.

Its subcellular location is the cell inner membrane. The catalysed reaction is GTP + H2O = GDP + phosphate + H(+). Functionally, required for accurate and efficient protein synthesis under certain stress conditions. May act as a fidelity factor of the translation reaction, by catalyzing a one-codon backward translocation of tRNAs on improperly translocated ribosomes. Back-translocation proceeds from a post-translocation (POST) complex to a pre-translocation (PRE) complex, thus giving elongation factor G a second chance to translocate the tRNAs correctly. Binds to ribosomes in a GTP-dependent manner. The polypeptide is Elongation factor 4 (Azoarcus sp. (strain BH72)).